Reading from the N-terminus, the 465-residue chain is Putative multidrug resistance protein MdtD (465 aa).

A run of 13 helical transmembrane segments spans residues 12–32, 49–69, 72–92, 102–124, 138–158, 165–185, 195–215, 219–239, 267–287, 290–310, 342–362, 393–413, and 430–450; these read LWIVAFGFFMQTLDTTIVNTA, SVIVSYVLTVAVMLPASGWLA, IGVKWVFFSAIILFTFGSLMC, ILSRVLQGVGGAMMVPVGRLTVM, FVTLPGQIGPLVGPALGGFLV, WIFLINLPVGVIGALATLLLM, FDISGFIMLAIGMATLTLALD, GLGLSPLAIAGLILCGVIALG, LVGSMSARIGSGMLPFMTPIF, IGLGFSPFHAGLMMIPMIIGS, LSLPLVAIMGWTLLMPVVLFF, LLSMAMQLSMSIGVSTAGILL, and SAFLYSYLCMAIIIALPALIF.

This sequence belongs to the major facilitator superfamily. TCR/Tet family.

It localises to the cell inner membrane. This is Putative multidrug resistance protein MdtD from Yersinia pseudotuberculosis serotype O:1b (strain IP 31758).